Consider the following 1001-residue polypeptide: Serine/threonine-protein kinase TAO1 (1001 aa).

Phosphoserine is present on Ser9. Residues 28-281 (FTDLREIGHG…SEELLKHMFV (254 aa)) enclose the Protein kinase domain. ATP is bound by residues 34–42 (IGHGSFGAV) and Lys57. The active-site Proton acceptor is the Asp151. Disordered regions lie at residues 324-380 (PAVE…DKSE) and 404-431 (ENYQEEGDPRTRASAPQSPPQVSRHKSH). Residues 350-370 (SNQSIPSMSISASSQSSSVNS) show a composition bias toward low complexity. Phosphoserine occurs at positions 421 and 445. Positions 458 to 651 (SELREQMSGY…QTQKDLEHAM (194 aa)) form a coiled coil. The tract at residues 567-587 (KEELNENQSTPKKEKQEWLSK) is disordered. Basic and acidic residues predominate over residues 577–587 (PKKEKQEWLSK). Thr669 carries the phosphothreonine modification. A coiled-coil region spans residues 754–877 (KAVLKRLKEE…LERQAREIEA (124 aa)). A disordered region spans residues 905 to 1001 (PGASSWSHNP…ISNGSHMSYT (97 aa)). The segment covering 906 to 915 (GASSWSHNPT) has biased composition (polar residues). Ser965 bears the Phosphoserine mark. The span at 975–1001 (GGRTEQGMSRSTSVTSQISNGSHMSYT) shows a compositional bias: polar residues.

This sequence belongs to the protein kinase superfamily. STE Ser/Thr protein kinase family. STE20 subfamily. As to quaternary structure, self-associates. Interacts with MAP2K3. Interacts with SPRED1. Interacts with TESK1; the interaction inhibits TAOK1 kinase activity. Interacts with MAP3K7. Post-translationally, proteolytically processed by caspase-3 (CASP3). Autophosphorylated. Phosphorylated by ATM in response to DNA damage. Phosphorylated by LRRK2.

It is found in the cytoplasm. The enzyme catalyses L-seryl-[protein] + ATP = O-phospho-L-seryl-[protein] + ADP + H(+). It carries out the reaction L-threonyl-[protein] + ATP = O-phospho-L-threonyl-[protein] + ADP + H(+). Serine/threonine-protein kinase activity is inhibited by SPRED1. Functionally, serine/threonine-protein kinase involved in various processes such as p38/MAPK14 stress-activated MAPK cascade, DNA damage response and regulation of cytoskeleton stability. Phosphorylates MAP2K3, MAP2K6 and MARK2. Acts as an activator of the p38/MAPK14 stress-activated MAPK cascade by mediating phosphorylation and subsequent activation of the upstream MAP2K3 and MAP2K6 kinases. Involved in G-protein coupled receptor signaling to p38/MAPK14. In response to DNA damage, involved in the G2/M transition DNA damage checkpoint by activating the p38/MAPK14 stress-activated MAPK cascade, probably by mediating phosphorylation of MAP2K3 and MAP2K6. Acts as a regulator of cytoskeleton stability by phosphorylating 'Thr-208' of MARK2, leading to activate MARK2 kinase activity and subsequent phosphorylation and detachment of MAPT/TAU from microtubules. Also acts as a regulator of apoptosis: regulates apoptotic morphological changes, including cell contraction, membrane blebbing and apoptotic bodies formation via activation of the MAPK8/JNK cascade. During fetal development, it plays an essential role in the regulation of neuronal differentiation and migration to the cortical plate. This is Serine/threonine-protein kinase TAO1 (Taok1) from Rattus norvegicus (Rat).